A 595-amino-acid polypeptide reads, in one-letter code: Chaperone protein HscA homolog (595 aa).

The protein belongs to the heat shock protein 70 family.

Functionally, chaperone involved in the maturation of iron-sulfur cluster-containing proteins. Has a low intrinsic ATPase activity which is markedly stimulated by HscB. The chain is Chaperone protein HscA homolog from Rickettsia peacockii (strain Rustic).